The following is a 556-amino-acid chain: General transcription factor IIF subunit 1 (556 aa).

Disordered stretches follow at residues 82-128 (TMTS…PAAA) and 226-499 (SRLQ…PFTE). Positions 84–128 (TSAPNGTNSTGTTPNTTTTTTTTTTTTTTTTTAAGTPGAPNPAAA) are enriched in low complexity. Residues 245–275 (SGKKSIEELEEAEHRNRNEDPNRYKTTNEEK) are compositionally biased toward basic and acidic residues. Composition is skewed to acidic residues over residues 291 to 338 (GNGE…DVDL) and 378 to 394 (GDDE…DQDD). 2 stretches are compositionally biased toward basic and acidic residues: residues 415–427 (VKKE…DSKS) and 450–461 (NKSDSSVDNRES). Positions 469–492 (SSPQAVQPNSPSQQQQQQQQNIDP) are enriched in low complexity.

It belongs to the TFIIF alpha subunit family. In terms of assembly, heterodimer of an alpha and a beta subunit.

It is found in the nucleus. In terms of biological role, TFIIF is a general transcription initiation factor that binds to RNA polymerase II and helps to recruit it to the initiation complex in collaboration with TFIIB. It promotes transcription elongation. This Dictyostelium discoideum (Social amoeba) protein is General transcription factor IIF subunit 1 (gtf2f1).